We begin with the raw amino-acid sequence, 216 residues long: GTP cyclohydrolase 1 (216 aa).

Zn(2+) is bound by residues C108, H111, and C179.

Belongs to the GTP cyclohydrolase I family. Toroid-shaped homodecamer, composed of two pentamers of five dimers.

It carries out the reaction GTP + H2O = 7,8-dihydroneopterin 3'-triphosphate + formate + H(+). Its pathway is cofactor biosynthesis; 7,8-dihydroneopterin triphosphate biosynthesis; 7,8-dihydroneopterin triphosphate from GTP: step 1/1. The polypeptide is GTP cyclohydrolase 1 (Shewanella sp. (strain ANA-3)).